Here is a 384-residue protein sequence, read N- to C-terminus: Carbamoyl phosphate synthase small chain (384 aa).

Residues 1 to 192 (MPIAAAKPAL…FGPVAEQQGQ (192 aa)) form a CPSase region. The L-glutamine site is built by Ser-51, Gly-244, and Gly-246. The region spanning 196-381 (TVVALDFGVK…VKLMRQQKAE (186 aa)) is the Glutamine amidotransferase type-1 domain. Residue Cys-272 is the Nucleophile of the active site. Residues Met-273, Gln-276, Asn-312, Gly-314, and Phe-315 each coordinate L-glutamine. Catalysis depends on residues His-354 and Glu-356.

Belongs to the CarA family. Composed of two chains; the small (or glutamine) chain promotes the hydrolysis of glutamine to ammonia, which is used by the large (or ammonia) chain to synthesize carbamoyl phosphate. Tetramer of heterodimers (alpha,beta)4.

The catalysed reaction is hydrogencarbonate + L-glutamine + 2 ATP + H2O = carbamoyl phosphate + L-glutamate + 2 ADP + phosphate + 2 H(+). It carries out the reaction L-glutamine + H2O = L-glutamate + NH4(+). It participates in amino-acid biosynthesis; L-arginine biosynthesis; carbamoyl phosphate from bicarbonate: step 1/1. It functions in the pathway pyrimidine metabolism; UMP biosynthesis via de novo pathway; (S)-dihydroorotate from bicarbonate: step 1/3. Its function is as follows. Small subunit of the glutamine-dependent carbamoyl phosphate synthetase (CPSase). CPSase catalyzes the formation of carbamoyl phosphate from the ammonia moiety of glutamine, carbonate, and phosphate donated by ATP, constituting the first step of 2 biosynthetic pathways, one leading to arginine and/or urea and the other to pyrimidine nucleotides. The small subunit (glutamine amidotransferase) binds and cleaves glutamine to supply the large subunit with the substrate ammonia. In Synechocystis sp. (strain ATCC 27184 / PCC 6803 / Kazusa), this protein is Carbamoyl phosphate synthase small chain.